Here is a 137-residue protein sequence, read N- to C-terminus: Peptide methionine sulfoxide reductase MsrB (137 aa).

Residues 7 to 129 (AEELKKNLSE…NSASLRFTDG (123 aa)) enclose the MsrB domain. 4 residues coordinate Zn(2+): Cys46, Cys49, Cys95, and Cys98. The Nucleophile role is filled by Cys118.

This sequence belongs to the MsrB Met sulfoxide reductase family. The cofactor is Zn(2+).

The enzyme catalyses L-methionyl-[protein] + [thioredoxin]-disulfide + H2O = L-methionyl-(R)-S-oxide-[protein] + [thioredoxin]-dithiol. The polypeptide is Peptide methionine sulfoxide reductase MsrB (Escherichia coli (strain K12 / MC4100 / BW2952)).